Consider the following 625-residue polypeptide: Interferon-induced GTP-binding protein MxE (625 aa).

Residues 40–313 (DLNLPAIAVI…LVEHIAKNLP (274 aa)) enclose the Dynamin-type G domain. Residues 50–57 (GDQSSGKS) are G1 motif. 50 to 57 (GDQSSGKS) contributes to the GTP binding site. The tract at residues 75-77 (VTR) is G2 motif. Positions 151 to 154 (DLPG) are G3 motif. GTP-binding positions include 151-155 (DLPGI) and 220-223 (TKPD). The G4 motif stretch occupies residues 220 to 223 (TKPD). Residues 252–255 (KCRG) form a G5 motif region. In terms of domain architecture, GED spans 536–625 (VREMAYHLTS…RVLSKFVHSA (90 aa)).

It belongs to the TRAFAC class dynamin-like GTPase superfamily. Dynamin/Fzo/YdjA family.

It localises to the cytoplasm. This is Interferon-induced GTP-binding protein MxE (mxe) from Danio rerio (Zebrafish).